A 404-amino-acid chain; its full sequence is L-cysteine:1D-myo-inositol 2-amino-2-deoxy-alpha-D-glucopyranoside ligase 1 (404 aa).

Cys-47 contacts Zn(2+). L-cysteinyl-5'-AMP contacts are provided by residues 47-50 (CGIT), Thr-62, and 85-87 (NIT). The 'HIGH' region signature appears at 49 to 59 (ITPYDSTHLGH). The short motif at 188–193 (ERGGDP) is the 'ERGGDP' region element. Trp-228 contacts L-cysteinyl-5'-AMP. Residue Cys-232 participates in Zn(2+) binding. 250 to 252 (GSD) serves as a coordination point for L-cysteinyl-5'-AMP. His-257 lines the Zn(2+) pocket. Ile-284 is a binding site for L-cysteinyl-5'-AMP. A 'KMSKS' region motif is present at residues 290 to 294 (KMSKS).

This sequence belongs to the class-I aminoacyl-tRNA synthetase family. MshC subfamily. As to quaternary structure, monomer. Zn(2+) serves as cofactor.

It carries out the reaction 1D-myo-inositol 2-amino-2-deoxy-alpha-D-glucopyranoside + L-cysteine + ATP = 1D-myo-inositol 2-(L-cysteinylamino)-2-deoxy-alpha-D-glucopyranoside + AMP + diphosphate + H(+). Catalyzes the ATP-dependent condensation of GlcN-Ins and L-cysteine to form L-Cys-GlcN-Ins. In Corynebacterium jeikeium (strain K411), this protein is L-cysteine:1D-myo-inositol 2-amino-2-deoxy-alpha-D-glucopyranoside ligase 1.